Reading from the N-terminus, the 677-residue chain is Methionine--tRNA ligase (677 aa).

A 'HIGH' region motif is present at residues 15–25 (PYANGSIHLGH). Residues cysteine 146, cysteine 149, cysteine 159, and cysteine 162 each contribute to the Zn(2+) site. The 'KMSKS' region signature appears at 333-337 (KMSKS). Lysine 336 provides a ligand contact to ATP. The tRNA-binding domain occupies 575-677 (DFAKVDLRVA…AGAKPGHQVK (103 aa)).

Belongs to the class-I aminoacyl-tRNA synthetase family. MetG type 1 subfamily. Homodimer. Zn(2+) is required as a cofactor.

Its subcellular location is the cytoplasm. It catalyses the reaction tRNA(Met) + L-methionine + ATP = L-methionyl-tRNA(Met) + AMP + diphosphate. In terms of biological role, is required not only for elongation of protein synthesis but also for the initiation of all mRNA translation through initiator tRNA(fMet) aminoacylation. The polypeptide is Methionine--tRNA ligase (Escherichia coli O157:H7).